The chain runs to 124 residues: Glycine cleavage system H protein (124 aa).

In terms of domain architecture, Lipoyl-binding spans 19-101 (VATVGITNHA…EGEGWLFKME (83 aa)). The residue at position 60 (Lys60) is an N6-lipoyllysine.

Belongs to the GcvH family. In terms of assembly, the glycine cleavage system is composed of four proteins: P, T, L and H. It depends on (R)-lipoate as a cofactor.

Functionally, the glycine cleavage system catalyzes the degradation of glycine. The H protein shuttles the methylamine group of glycine from the P protein to the T protein. The polypeptide is Glycine cleavage system H protein (Thermotoga maritima (strain ATCC 43589 / DSM 3109 / JCM 10099 / NBRC 100826 / MSB8)).